Consider the following 93-residue polypeptide: Large ribosomal subunit protein uL23cz/uL23cy (93 aa).

The protein belongs to the universal ribosomal protein uL23 family. As to quaternary structure, part of the 50S ribosomal subunit.

The protein resides in the plastid. Its subcellular location is the chloroplast. Functionally, binds to 23S rRNA. The protein is Large ribosomal subunit protein uL23cz/uL23cy (rpl23-A) of Glycine max (Soybean).